The chain runs to 284 residues: Bifunctional protein FolD (284 aa).

Residues 166–168 (GAS) and Ile232 contribute to the NADP(+) site.

This sequence belongs to the tetrahydrofolate dehydrogenase/cyclohydrolase family. As to quaternary structure, homodimer.

It catalyses the reaction (6R)-5,10-methylene-5,6,7,8-tetrahydrofolate + NADP(+) = (6R)-5,10-methenyltetrahydrofolate + NADPH. It carries out the reaction (6R)-5,10-methenyltetrahydrofolate + H2O = (6R)-10-formyltetrahydrofolate + H(+). It participates in one-carbon metabolism; tetrahydrofolate interconversion. In terms of biological role, catalyzes the oxidation of 5,10-methylenetetrahydrofolate to 5,10-methenyltetrahydrofolate and then the hydrolysis of 5,10-methenyltetrahydrofolate to 10-formyltetrahydrofolate. The polypeptide is Bifunctional protein FolD (Azotobacter vinelandii (strain DJ / ATCC BAA-1303)).